The sequence spans 298 residues: ADP-ribosyl cyclase/cyclic ADP-ribose hydrolase 1 (298 aa).

Over 1–21 (MPDYEFSPASGDRPRSWISKQ) the chain is Cytoplasmic. A helical; Signal-anchor for type II membrane protein transmembrane segment spans residues 22 to 42 (VLIVLGVCLPVILALAIWVGV). The Extracellular segment spans residues 43-298 (LTWRQSSMGA…PEHPSCSVLM (256 aa)). 3 disulfide bridges follow: Cys64-Cys80, Cys97-Cys178, and Cys158-Cys171. The N-linked (GlcNAc...) asparagine glycan is linked to Asn98. Cys117 is a catalytic residue. Asn118 carries N-linked (GlcNAc...) asparagine glycosylation. A glycan (N-linked (GlcNAc...) asparagine) is linked at Asn177. Cys199 is an active-site residue. N-linked (GlcNAc...) asparagine glycosylation is found at Asn207 and Asn268. Cystine bridges form between Cys252–Cys273 and Cys285–Cys294.

This sequence belongs to the ADP-ribosyl cyclase family. Homodimer. As to expression, osteoclasts.

It localises to the cell membrane. It is found in the microsome membrane. The protein resides in the endoplasmic reticulum membrane. It catalyses the reaction NAD(+) = cyclic ADP-beta-D-ribose + nicotinamide + H(+). The catalysed reaction is 2'-phospho-cyclic ADP-ribose + nicotinate = nicotinate-adenine dinucleotide phosphate. It carries out the reaction NAD(+) + H2O = ADP-D-ribose + nicotinamide + H(+). The enzyme catalyses nicotinate + NADP(+) = nicotinate-adenine dinucleotide phosphate + nicotinamide. Synthesizes cyclic ADP-ribose (cADPR), a second messenger for glucose-induced insulin secretion. Synthesizes the Ca(2+) mobilizer nicotinate-adenine dinucleotide phosphate, NAADP(+), from 2'-phospho-cADPR and nicotinic acid, as well as from NADP(+) and nicotinic acid. Also has cADPR hydrolase activity. This is ADP-ribosyl cyclase/cyclic ADP-ribose hydrolase 1 (CD38) from Oryctolagus cuniculus (Rabbit).